The sequence spans 227 residues: Cytochrome c oxidase subunit 2 (227 aa).

Residues 1 to 14 lie on the Mitochondrial intermembrane side of the membrane; it reads MPYPMQLGFQDATS. Residues 15 to 45 traverse the membrane as a helical segment; sequence PIMEELTYFHDHTLMIVFLISSLVLYIIILM. Residues 46-59 are Mitochondrial matrix-facing; it reads LTTKLTHTSTMDAQ. A helical transmembrane segment spans residues 60 to 87; the sequence is EVETIWTILPAVILVLIALPSLRILYMM. At 88 to 227 the chain is on the mitochondrial intermembrane side; sequence DEIYNPYLTI…YFEKWSSMMQ (140 aa). Residues His161, Cys196, Glu198, Cys200, His204, and Met207 each contribute to the Cu cation site. Residue Glu198 coordinates Mg(2+). Position 218 is a phosphotyrosine (Tyr218).

It belongs to the cytochrome c oxidase subunit 2 family. In terms of assembly, component of the cytochrome c oxidase (complex IV, CIV), a multisubunit enzyme composed of 14 subunits. The complex is composed of a catalytic core of 3 subunits MT-CO1, MT-CO2 and MT-CO3, encoded in the mitochondrial DNA, and 11 supernumerary subunits COX4I, COX5A, COX5B, COX6A, COX6B, COX6C, COX7A, COX7B, COX7C, COX8 and NDUFA4, which are encoded in the nuclear genome. The complex exists as a monomer or a dimer and forms supercomplexes (SCs) in the inner mitochondrial membrane with NADH-ubiquinone oxidoreductase (complex I, CI) and ubiquinol-cytochrome c oxidoreductase (cytochrome b-c1 complex, complex III, CIII), resulting in different assemblies (supercomplex SCI(1)III(2)IV(1) and megacomplex MCI(2)III(2)IV(2)). Found in a complex with TMEM177, COA6, COX18, COX20, SCO1 and SCO2. Interacts with TMEM177 in a COX20-dependent manner. Interacts with COX20. Interacts with COX16. Cu cation serves as cofactor.

Its subcellular location is the mitochondrion inner membrane. The catalysed reaction is 4 Fe(II)-[cytochrome c] + O2 + 8 H(+)(in) = 4 Fe(III)-[cytochrome c] + 2 H2O + 4 H(+)(out). Its function is as follows. Component of the cytochrome c oxidase, the last enzyme in the mitochondrial electron transport chain which drives oxidative phosphorylation. The respiratory chain contains 3 multisubunit complexes succinate dehydrogenase (complex II, CII), ubiquinol-cytochrome c oxidoreductase (cytochrome b-c1 complex, complex III, CIII) and cytochrome c oxidase (complex IV, CIV), that cooperate to transfer electrons derived from NADH and succinate to molecular oxygen, creating an electrochemical gradient over the inner membrane that drives transmembrane transport and the ATP synthase. Cytochrome c oxidase is the component of the respiratory chain that catalyzes the reduction of oxygen to water. Electrons originating from reduced cytochrome c in the intermembrane space (IMS) are transferred via the dinuclear copper A center (CU(A)) of subunit 2 and heme A of subunit 1 to the active site in subunit 1, a binuclear center (BNC) formed by heme A3 and copper B (CU(B)). The BNC reduces molecular oxygen to 2 water molecules using 4 electrons from cytochrome c in the IMS and 4 protons from the mitochondrial matrix. The chain is Cytochrome c oxidase subunit 2 (MT-CO2) from Osphranter robustus (Wallaroo).